A 477-amino-acid chain; its full sequence is Histidine permease HisP (477 aa).

The next 12 helical transmembrane spans lie at 16–36, 40–60, 86–106, 126–146, 156–176, 192–212, 238–258, 284–304, 337–359, 364–386, 408–428, and 437–457; these read ITMI…SGAT, AGPW…YFVM, PAFG…TIAV, IFSG…VGAF, IKVI…FGVL, HGFV…GFSF, SIFW…AAII, IGFA…VISS, IPFY…GIFG, LFLI…VSHI, WFPF…INLD, and WGEG…YFGY.

This sequence belongs to the amino acid-polyamine-organocation (APC) superfamily. Amino acid transporter (AAT) (TC 2.A.3.1) family.

The protein localises to the cell membrane. Its function is as follows. Involved in histidine uptake. Has low affinity for arginine and lysine. Plays no significant role in the excretion of accumulated histidine. In Lactococcus lactis subsp. cremoris (strain MG1363), this protein is Histidine permease HisP.